The sequence spans 100 residues: Large ribosomal subunit protein uL23 (100 aa).

Belongs to the universal ribosomal protein uL23 family. As to quaternary structure, part of the 50S ribosomal subunit. Contacts protein L29, and trigger factor when it is bound to the ribosome.

Its function is as follows. One of the early assembly proteins it binds 23S rRNA. One of the proteins that surrounds the polypeptide exit tunnel on the outside of the ribosome. Forms the main docking site for trigger factor binding to the ribosome. This chain is Large ribosomal subunit protein uL23, found in Buchnera aphidicola subsp. Schizaphis graminum (strain Sg).